We begin with the raw amino-acid sequence, 437 residues long: Adenylosuccinate synthetase (437 aa).

Residues 12-18 and 40-42 each bind GTP; these read GDEGKGK and GHT. The active-site Proton acceptor is the Asp13. Asp13 and Gly40 together coordinate Mg(2+). IMP contacts are provided by residues 13 to 16, 38 to 41, Thr128, Arg142, Gln223, Thr238, and Arg302; these read DEGK and NAGH. His41 functions as the Proton donor in the catalytic mechanism. 298 to 304 is a binding site for substrate; the sequence is TTTGRRR. GTP is bound by residues Arg304, 330–332, and 412–414; these read KLD and SLG.

Belongs to the adenylosuccinate synthetase family. In terms of assembly, homodimer. Requires Mg(2+) as cofactor.

Its subcellular location is the cytoplasm. It catalyses the reaction IMP + L-aspartate + GTP = N(6)-(1,2-dicarboxyethyl)-AMP + GDP + phosphate + 2 H(+). It participates in purine metabolism; AMP biosynthesis via de novo pathway; AMP from IMP: step 1/2. In terms of biological role, plays an important role in the de novo pathway of purine nucleotide biosynthesis. Catalyzes the first committed step in the biosynthesis of AMP from IMP. This is Adenylosuccinate synthetase from Synechococcus sp. (strain RCC307).